Here is a 351-residue protein sequence, read N- to C-terminus: MIIMKVLMPSIYYPYIGGITLHVENLVKRLKDIEFHILTYDSYEENEYKNVIIHNVPHLKKFRGISYLINAYKIGKNIIESEGIDLIHSHYAFPQGCVGALLKNKLSIPHILTLHGSDALILKNSIKGRYFFKYATTNSDKIICVSKYIKNQLDENLKNRAIVIYNGVNKEILYNEGDYNFGLFVGAFVPQKGVDILIDAIKDIDFNFKLIGDGKLYKKIENFVVKNNLSHIELLGRKSFDEVASFMRKCSFLVVPSRSEGFGMVAVEGMACSKPVIATRVGGLGEIVIDGYNGLLAEKNNPNDLKEKILELINNEELRKTLGENGKEFSKKFSWEKCVMGVRKVYEELSD.

This sequence belongs to the glycosyltransferase group 1 family. Glycosyltransferase 4 subfamily.

This is an uncharacterized protein from Methanocaldococcus jannaschii (strain ATCC 43067 / DSM 2661 / JAL-1 / JCM 10045 / NBRC 100440) (Methanococcus jannaschii).